The primary structure comprises 519 residues: 2,3-bisphosphoglycerate-independent phosphoglycerate mutase (519 aa).

Residues aspartate 9 and serine 60 each coordinate Mn(2+). The active-site Phosphoserine intermediate is the serine 60. Basic and acidic residues predominate over residues aspartate 76–alanine 91. Positions aspartate 76–phenylalanine 102 are disordered. Residues histidine 134, arginine 163–aspartate 164, arginine 195, arginine 201, arginine 267–arginine 270, and lysine 341 contribute to the substrate site. Residues aspartate 408, histidine 412, aspartate 449, histidine 450, and histidine 466 each coordinate Mn(2+).

Belongs to the BPG-independent phosphoglycerate mutase family. Mn(2+) is required as a cofactor.

It catalyses the reaction (2R)-2-phosphoglycerate = (2R)-3-phosphoglycerate. It functions in the pathway carbohydrate degradation; glycolysis; pyruvate from D-glyceraldehyde 3-phosphate: step 3/5. Its function is as follows. Catalyzes the interconversion of 2-phosphoglycerate and 3-phosphoglycerate. In Haloarcula marismortui (strain ATCC 43049 / DSM 3752 / JCM 8966 / VKM B-1809) (Halobacterium marismortui), this protein is 2,3-bisphosphoglycerate-independent phosphoglycerate mutase.